The following is a 184-amino-acid chain: UPF0149 protein PSPA7_5968 (184 aa).

This sequence belongs to the UPF0149 family.

This chain is UPF0149 protein PSPA7_5968, found in Pseudomonas paraeruginosa (strain DSM 24068 / PA7) (Pseudomonas aeruginosa (strain PA7)).